We begin with the raw amino-acid sequence, 225 residues long: Thymidylate kinase (225 aa).

9–16 (GIEGCGKT) provides a ligand contact to ATP.

Belongs to the thymidylate kinase family.

It carries out the reaction dTMP + ATP = dTDP + ADP. Functionally, phosphorylation of dTMP to form dTDP in both de novo and salvage pathways of dTTP synthesis. The protein is Thymidylate kinase of Citrifermentans bemidjiense (strain ATCC BAA-1014 / DSM 16622 / JCM 12645 / Bem) (Geobacter bemidjiensis).